We begin with the raw amino-acid sequence, 215 residues long: 3-demethoxyubiquinol 3-hydroxylase (215 aa).

The interval 26-47 (PSSAHSQRPSPAVVQPEHKMSE) is disordered. Glu64, Glu94, His97, Glu146, Glu178, and His181 together coordinate Fe cation.

The protein belongs to the COQ7 family. Fe cation serves as cofactor.

The protein resides in the cell membrane. The enzyme catalyses a 5-methoxy-2-methyl-3-(all-trans-polyprenyl)benzene-1,4-diol + AH2 + O2 = a 3-demethylubiquinol + A + H2O. Its pathway is cofactor biosynthesis; ubiquinone biosynthesis. Catalyzes the hydroxylation of 2-nonaprenyl-3-methyl-6-methoxy-1,4-benzoquinol during ubiquinone biosynthesis. This is 3-demethoxyubiquinol 3-hydroxylase from Pseudomonas syringae pv. syringae (strain B728a).